A 297-amino-acid chain; its full sequence is MNTIVMQADKKLQEKIRTDLAQHHISNNNPYVVFSAKISGATVLLYTSGKLVFQGSNASHIAQKYGFIEQKESCSSESQDIPIIGTDEVGNGSYFGGLAVVASFVTPKDHAYLKKLGVGDSKTLTDQKIKQIAPLLEKAIPHKALLLSPQKYNQVVSPNNKHNAVSVKVALHNQAIFLLLQDGFEPEKIVIDAFTSSKNYQNYLKNEKNQFKQTITLEEKAENKYLAVAVSSIIARNLFLENLNKLSDDVGYKLPSGAGHQSDKVASQLLKAYGISSLEHCAKLHFANTKKAQALLK.

In terms of domain architecture, RNase H type-2 spans Ile-81–Lys-297. Positions 87, 88, and 192 each coordinate a divalent metal cation.

It belongs to the RNase HII family. RnhC subfamily. Mn(2+) serves as cofactor. The cofactor is Mg(2+).

It is found in the cytoplasm. The enzyme catalyses Endonucleolytic cleavage to 5'-phosphomonoester.. Endonuclease that specifically degrades the RNA of RNA-DNA hybrids. This Streptococcus agalactiae serotype Ia (strain ATCC 27591 / A909 / CDC SS700) protein is Ribonuclease HIII.